Consider the following 252-residue polypeptide: Enolase-phosphatase E1 (252 aa).

Mg(2+)-binding residues include aspartate 14 and glutamate 16. Residues 143-144 (SS) and lysine 177 each bind substrate. Aspartate 202 lines the Mg(2+) pocket.

It belongs to the HAD-like hydrolase superfamily. MasA/MtnC family. In terms of assembly, monomer. The cofactor is Mg(2+).

Its subcellular location is the cytoplasm. The protein resides in the nucleus. It catalyses the reaction 5-methylsulfanyl-2,3-dioxopentyl phosphate + H2O = 1,2-dihydroxy-5-(methylsulfanyl)pent-1-en-3-one + phosphate. The protein operates within amino-acid biosynthesis; L-methionine biosynthesis via salvage pathway; L-methionine from S-methyl-5-thio-alpha-D-ribose 1-phosphate: step 3/6. It functions in the pathway amino-acid biosynthesis; L-methionine biosynthesis via salvage pathway; L-methionine from S-methyl-5-thio-alpha-D-ribose 1-phosphate: step 4/6. Bifunctional enzyme that catalyzes the enolization of 2,3-diketo-5-methylthiopentyl-1-phosphate (DK-MTP-1-P) into the intermediate 2-hydroxy-3-keto-5-methylthiopentenyl-1-phosphate (HK-MTPenyl-1-P), which is then dephosphorylated to form the acireductone 1,2-dihydroxy-3-keto-5-methylthiopentene (DHK-MTPene). The polypeptide is Enolase-phosphatase E1 (Drosophila pseudoobscura pseudoobscura (Fruit fly)).